Consider the following 517-residue polypeptide: Serine carboxypeptidase ctsa-3.2 (517 aa).

Residues 1-21 (MWWTSLVFSVLLFDLIFISNC) form the signal peptide. Ser-172 is an active-site residue. A glycan (N-linked (GlcNAc...) asparagine) is linked at Asn-269. Residues Asp-418 and His-485 contribute to the active site.

It belongs to the peptidase S10 family.

The sequence is that of Serine carboxypeptidase ctsa-3.2 from Caenorhabditis elegans.